Consider the following 375-residue polypeptide: Formate dehydrogenase (375 aa).

Positions 94 and 120 each coordinate substrate. Residues 175–176, Asp-196, 231–235, Thr-257, Asp-283, 312–315, and Ser-358 each bind NAD(+); these read RI, PLHEK, and HMSG.

The protein belongs to the D-isomer specific 2-hydroxyacid dehydrogenase family. FDH subfamily. Homodimer.

It localises to the cytoplasm. It catalyses the reaction formate + NAD(+) = CO2 + NADH. Its function is as follows. Catalyzes the NAD(+)-dependent oxidation of formate to carbon dioxide. Formate oxidation is the final step in the methanol oxidation pathway in methylotrophic microorganisms. Has a role in the detoxification of exogenous formate in non-methylotrophic organisms. The protein is Formate dehydrogenase of Neurospora crassa (strain ATCC 24698 / 74-OR23-1A / CBS 708.71 / DSM 1257 / FGSC 987).